We begin with the raw amino-acid sequence, 227 residues long: Cytidylate kinase (227 aa).

Residue 7 to 15 (GPSGAGKGT) coordinates ATP.

The protein belongs to the cytidylate kinase family. Type 1 subfamily.

It localises to the cytoplasm. The catalysed reaction is CMP + ATP = CDP + ADP. The enzyme catalyses dCMP + ATP = dCDP + ADP. The protein is Cytidylate kinase of Actinobacillus succinogenes (strain ATCC 55618 / DSM 22257 / CCUG 43843 / 130Z).